We begin with the raw amino-acid sequence, 143 residues long: MTIERTFSIIKPDAVAKNIIGEIYHRFECAGLHIIAAKMLHLSQEQAAGFYAEHKGKPFYDNLLKFMTSGPIVVQVLEGQDAIRRHRELLGSTDPEKAQAGTIRADHAISVTQNAVHGSDSSESAAREIEFFFTEDEICPRTR.

The ATP site is built by Lys-11, Phe-59, Arg-87, Thr-93, Arg-104, and Asn-114. Catalysis depends on His-117, which acts as the Pros-phosphohistidine intermediate.

Belongs to the NDK family. Homotetramer. Mg(2+) serves as cofactor.

Its subcellular location is the cytoplasm. It carries out the reaction a 2'-deoxyribonucleoside 5'-diphosphate + ATP = a 2'-deoxyribonucleoside 5'-triphosphate + ADP. It catalyses the reaction a ribonucleoside 5'-diphosphate + ATP = a ribonucleoside 5'-triphosphate + ADP. Major role in the synthesis of nucleoside triphosphates other than ATP. The ATP gamma phosphate is transferred to the NDP beta phosphate via a ping-pong mechanism, using a phosphorylated active-site intermediate. The polypeptide is Nucleoside diphosphate kinase (Tolumonas auensis (strain DSM 9187 / NBRC 110442 / TA 4)).